Consider the following 664-residue polypeptide: Translation factor GUF1, mitochondrial (664 aa).

Residues 63–246 form the tr-type G domain; it reads SNYRNFSIVA…SIINNIPPPQ (184 aa). Residues 72–79, 139–143, and 193–196 contribute to the GTP site; these read AHVDHGKS, DTPGH, and NKID.

Belongs to the TRAFAC class translation factor GTPase superfamily. Classic translation factor GTPase family. LepA subfamily.

Its subcellular location is the mitochondrion inner membrane. The catalysed reaction is GTP + H2O = GDP + phosphate + H(+). In terms of biological role, promotes mitochondrial protein synthesis. May act as a fidelity factor of the translation reaction, by catalyzing a one-codon backward translocation of tRNAs on improperly translocated ribosomes. Binds to mitochondrial ribosomes in a GTP-dependent manner. The sequence is that of Translation factor GUF1, mitochondrial from Clavispora lusitaniae (strain ATCC 42720) (Yeast).